Reading from the N-terminus, the 503-residue chain is Na(+)-translocating NADH-quinone reductase subunit B (503 aa).

4 helical membrane-spanning segments follow: residues 55–75 (MMLVVIALFPATFLAIWNSGI), 120–140 (IFLPLLIISYTVGGACEVLFA), 161–181 (TLPPTIPYWMAALGIAFGVVV), and 186–206 (FGGTGMNILNPALSGRAFLFF). An FMN phosphoryl threonine modification is found at threonine 248. 5 consecutive transmembrane segments (helical) span residues 361–381 (TSTFACLLGAVFLVITGIASW), 387–407 (FGIGAFVTAWLFKICSILIAG), 417–437 (FFIPAYRQLFLGGLAFGLVFM), 452–472 (WIYGLFIGFMTIIIRLINPAY), and 475–495 (GVMLAILLGNVFAPLLDYFAV).

This sequence belongs to the NqrB/RnfD family. Composed of six subunits; NqrA, NqrB, NqrC, NqrD, NqrE and NqrF. The cofactor is FMN.

It localises to the cell inner membrane. It catalyses the reaction a ubiquinone + n Na(+)(in) + NADH + H(+) = a ubiquinol + n Na(+)(out) + NAD(+). Functionally, NQR complex catalyzes the reduction of ubiquinone-1 to ubiquinol by two successive reactions, coupled with the transport of Na(+) ions from the cytoplasm to the periplasm. NqrA to NqrE are probably involved in the second step, the conversion of ubisemiquinone to ubiquinol. This chain is Na(+)-translocating NADH-quinone reductase subunit B, found in Chlamydia abortus (strain DSM 27085 / S26/3) (Chlamydophila abortus).